Here is a 339-residue protein sequence, read N- to C-terminus: 4-hydroxy-2-oxovalerate aldolase (339 aa).

Residues 7 to 257 (IRIMDTTLRD…QVGVDLYKIM (251 aa)) form the Pyruvate carboxyltransferase domain. 15-16 (RD) contributes to the substrate binding site. Position 16 (D16) interacts with Mn(2+). The active-site Proton acceptor is H19. Substrate-binding residues include S169 and H196. Mn(2+) contacts are provided by H196 and H198. Y286 is a substrate binding site.

Belongs to the 4-hydroxy-2-oxovalerate aldolase family.

It carries out the reaction (S)-4-hydroxy-2-oxopentanoate = acetaldehyde + pyruvate. The polypeptide is 4-hydroxy-2-oxovalerate aldolase (Pelotomaculum thermopropionicum (strain DSM 13744 / JCM 10971 / SI)).